The chain runs to 183 residues: MNIQQIVEQLKQNEVVAYPTEAVFGLGCNPNSESAVQKLLVLKQRSVEKGLILVAPCLDYFLPFIDTTAFSQADWDRLQAKYDRPTTWVVPAKTTTPKFLTGQFDSIAVRLCDHPAVKQLCEQAGFALTSTSANLTTLPPCRTAEEVKTQFGADFPVLDLPVGEATNPSEIRDLFTHQLFRQG.

Residues Met-1–Gly-183 enclose the YrdC-like domain.

It belongs to the SUA5 family. TsaC subfamily.

Its subcellular location is the cytoplasm. It catalyses the reaction L-threonine + hydrogencarbonate + ATP = L-threonylcarbamoyladenylate + diphosphate + H2O. Functionally, required for the formation of a threonylcarbamoyl group on adenosine at position 37 (t(6)A37) in tRNAs that read codons beginning with adenine. Catalyzes the conversion of L-threonine, HCO(3)(-)/CO(2) and ATP to give threonylcarbamoyl-AMP (TC-AMP) as the acyladenylate intermediate, with the release of diphosphate. The sequence is that of Threonylcarbamoyl-AMP synthase from Pasteurella multocida (strain Pm70).